Here is a 178-residue protein sequence, read N- to C-terminus: Cytochrome b6-f complex iron-sulfur subunit (178 aa).

A helical transmembrane segment spans residues 20-42 (LLTFGTVTGVALGALYPVAQYFT). Positions 71 to 161 (THPVGDRSLV…VSIEDDQVLV (91 aa)) constitute a Rieske domain. Cys107, His109, Cys125, and His128 together coordinate [2Fe-2S] cluster. A disulfide bond links Cys112 and Cys127.

It belongs to the Rieske iron-sulfur protein family. As to quaternary structure, the 4 large subunits of the cytochrome b6-f complex are cytochrome b6, subunit IV (17 kDa polypeptide, PetD), cytochrome f and the Rieske protein, while the 4 small subunits are PetG, PetL, PetM and PetN. The complex functions as a dimer. The cofactor is [2Fe-2S] cluster.

The protein resides in the cellular thylakoid membrane. It catalyses the reaction 2 oxidized [plastocyanin] + a plastoquinol + 2 H(+)(in) = 2 reduced [plastocyanin] + a plastoquinone + 4 H(+)(out). In terms of biological role, component of the cytochrome b6-f complex, which mediates electron transfer between photosystem II (PSII) and photosystem I (PSI), cyclic electron flow around PSI, and state transitions. In Prochlorococcus marinus (strain NATL1A), this protein is Cytochrome b6-f complex iron-sulfur subunit.